The following is a 471-amino-acid chain: Type 2 glycosyltransferase (471 aa).

Residues 4-24 (ILGWFWAFVSAFVLRYLRTIV) form a helical membrane-spanning segment. 3 N-linked (GlcNAc...) asparagine glycosylation sites follow: N29, N88, and N222. 3 consecutive transmembrane segments (helical) span residues 305–325 (CLQT…FYSL), 339–359 (MAFT…KLWG), and 368–388 (VIYI…KFWG). An N-linked (GlcNAc...) asparagine glycan is attached at N458.

The protein belongs to the GT2 glycosyltransferase family.

It is found in the cell membrane. Its function is as follows. Glycosyltransferase involved in the maintenance of the outermost surface of the fungal cell wall. Likely functions in the synthesis of a currently unknown, potentially minor but widespread, extracellular or outer cell wall polysaccharide which plays a key role in facilitating many interactions between plants and fungi by enabling hyphal growth on solid matrices. In Zymoseptoria tritici (strain CBS 115943 / IPO323) (Speckled leaf blotch fungus), this protein is Type 2 glycosyltransferase.